The chain runs to 278 residues: Elongation factor Ts (278 aa).

Residues 79–82 (TDFV) are involved in Mg(2+) ion dislocation from EF-Tu.

The protein belongs to the EF-Ts family.

It localises to the cytoplasm. Associates with the EF-Tu.GDP complex and induces the exchange of GDP to GTP. It remains bound to the aminoacyl-tRNA.EF-Tu.GTP complex up to the GTP hydrolysis stage on the ribosome. The chain is Elongation factor Ts from Borrelia recurrentis (strain A1).